Here is a 184-residue protein sequence, read N- to C-terminus: ATP synthase subunit delta (184 aa).

The protein belongs to the ATPase delta chain family. In terms of assembly, F-type ATPases have 2 components, F(1) - the catalytic core - and F(0) - the membrane proton channel. F(1) has five subunits: alpha(3), beta(3), gamma(1), delta(1), epsilon(1). F(0) has three main subunits: a(1), b(2) and c(10-14). The alpha and beta chains form an alternating ring which encloses part of the gamma chain. F(1) is attached to F(0) by a central stalk formed by the gamma and epsilon chains, while a peripheral stalk is formed by the delta and b chains.

It localises to the cell inner membrane. F(1)F(0) ATP synthase produces ATP from ADP in the presence of a proton or sodium gradient. F-type ATPases consist of two structural domains, F(1) containing the extramembraneous catalytic core and F(0) containing the membrane proton channel, linked together by a central stalk and a peripheral stalk. During catalysis, ATP synthesis in the catalytic domain of F(1) is coupled via a rotary mechanism of the central stalk subunits to proton translocation. In terms of biological role, this protein is part of the stalk that links CF(0) to CF(1). It either transmits conformational changes from CF(0) to CF(1) or is implicated in proton conduction. This is ATP synthase subunit delta from Paramagnetospirillum magneticum (strain ATCC 700264 / AMB-1) (Magnetospirillum magneticum).